A 134-amino-acid polypeptide reads, in one-letter code: MKVVHTVGKRRTAIARATAKEGSGKIRINKKPLELMEPKYIKMKLMEPVILAGEALSNIDVDIDVKGGGIVSQMDATRTALGKAIVEFTGKMDLKEKFLSYDRTLLVSDARRTEPHKPSKSSKGPRAKRQKSYR.

Positions 109–134 (DARRTEPHKPSKSSKGPRAKRQKSYR) are disordered. Basic residues predominate over residues 118 to 134 (PSKSSKGPRAKRQKSYR).

The protein belongs to the universal ribosomal protein uS9 family.

The polypeptide is Small ribosomal subunit protein uS9 (Methanococcus maripaludis (strain DSM 14266 / JCM 13030 / NBRC 101832 / S2 / LL)).